The primary structure comprises 418 residues: Sialidase-3 (418 aa).

Residues 24-27 (YRIP) carry the FRIP motif motif. Positions 25 and 45 each coordinate substrate. The Proton acceptor role is filled by aspartate 50. The BNR 1 repeat unit spans residues 129 to 140 (LCSEDAGCSWGE). Substrate is bound by residues tyrosine 179 and tyrosine 181. The stretch at 203-214 (SDDFGVTWHHGK) is one BNR 2 repeat. Substrate is bound by residues glutamate 223 and arginine 243. The stretch at 254-265 (STDSGGCFQKPT) is one BNR 3 repeat. A Phosphoserine modification is found at serine 312. A substrate-binding site is contributed by arginine 339. The Nucleophile role is filled by tyrosine 369. Residue glutamate 386 is part of the active site.

The protein belongs to the glycosyl hydrolase 33 family. In terms of assembly, interacts with CAV1; this interaction enhances NEU3 sialidase activity within caveola. Interacts with EGFR; this interaction mediates desialylation of EGFR and enhances downstream signaling. Palmitoylated; may regulate intracellular trafficking and anchorage to plasma membrane and endomembranes. In terms of tissue distribution, expressed in heart, brain and cerebral cortex.

The protein localises to the cell membrane. The protein resides in the membrane. Its subcellular location is the caveola. It is found in the early endosome membrane. It localises to the recycling endosome membrane. The protein localises to the lysosome membrane. It carries out the reaction Hydrolysis of alpha-(2-&gt;3)-, alpha-(2-&gt;6)-, alpha-(2-&gt;8)- glycosidic linkages of terminal sialic acid residues in oligosaccharides, glycoproteins, glycolipids, colominic acid and synthetic substrates.. It catalyses the reaction a ganglioside GD1a + H2O = a ganglioside GM1 + N-acetylneuraminate. The catalysed reaction is a ganglioside GD1a (d18:1(4E)) + H2O = a ganglioside GM1 (d18:1(4E)) + N-acetylneuraminate. The enzyme catalyses a ganglioside GD1b + H2O = a ganglioside GM1 + N-acetylneuraminate. It carries out the reaction a ganglioside GD1b (d18:1(4E)) + H2O = a ganglioside GM1 (d18:1(4E)) + N-acetylneuraminate. It catalyses the reaction a ganglioside GD3 + H2O = a ganglioside GM3 + N-acetylneuraminate. The catalysed reaction is a ganglioside GD3 (d18:1(4E)) + H2O = a ganglioside GM3 (d18:1(4E)) + N-acetylneuraminate. The enzyme catalyses a ganglioside GM3 + H2O = a beta-D-galactosyl-(1-&gt;4)-beta-D-glucosyl-(1&lt;-&gt;1)-ceramide + N-acetylneuraminate. It carries out the reaction a ganglioside GM1 + H2O = a ganglioside GA1 + N-acetylneuraminate. It catalyses the reaction a ganglioside GM1 (d18:1(4E)) + H2O = a ganglioside GA1 (d18:1(4E)) + N-acetylneuraminate. The catalysed reaction is a ganglioside GM2 (d18:1(4E)) + H2O = a ganglioside GA2 (d18:1(4E)) + N-acetylneuraminate. The enzyme catalyses a ganglioside GM3 (d18:1(4E)) + H2O = a beta-D-Gal-(1-&gt;4)-beta-D-Glc-(1&lt;-&gt;1)-Cer(d18:1(4E)) + N-acetylneuraminate. It carries out the reaction a ganglioside GT1b + H2O = a ganglioside GD1b + N-acetylneuraminate. Its function is as follows. Exo-alpha-sialidase that catalyzes the hydrolytic cleavage of the terminal sialic acid (N-acetylneuraminic acid, Neu5Ac) of a glycan moiety in the catabolism of glycolipids, glycoproteins and oligosacharides. Displays high catalytic efficiency for gangliosides including alpha-(2-&gt;3)-sialylated GD1a and GM3 and alpha-(2-&gt;8)-sialylated GD3. Plays a role in the regulation of transmembrane signaling through the modulation of ganglioside content of the lipid bilayer and by direct interaction with signaling receptors, such as EGFR. Desialylates EGFR and activates downstream signaling in proliferating cells. Contributes to clathrin-mediated endocytosis by regulating sorting of endocytosed receptors to early and recycling endosomes. The protein is Sialidase-3 (Neu3) of Mus musculus (Mouse).